We begin with the raw amino-acid sequence, 459 residues long: tRNA modification GTPase MnmE (459 aa).

3 residues coordinate (6S)-5-formyl-5,6,7,8-tetrahydrofolate: Arg23, Glu86, and Arg125. The TrmE-type G domain occupies 221–380 (GIDAVIIGKP…LENAITELFV (160 aa)). Asn231 is a binding site for K(+). GTP-binding positions include 231–236 (NVGKSS), 250–256 (TDIPGTT), and 275–278 (DTAG). Ser235 serves as a coordination point for Mg(2+). Positions 250, 252, and 255 each coordinate K(+). Thr256 provides a ligand contact to Mg(2+). Residue Lys459 participates in (6S)-5-formyl-5,6,7,8-tetrahydrofolate binding.

The protein belongs to the TRAFAC class TrmE-Era-EngA-EngB-Septin-like GTPase superfamily. TrmE GTPase family. Homodimer. Heterotetramer of two MnmE and two MnmG subunits. Requires K(+) as cofactor.

It localises to the cytoplasm. Its function is as follows. Exhibits a very high intrinsic GTPase hydrolysis rate. Involved in the addition of a carboxymethylaminomethyl (cmnm) group at the wobble position (U34) of certain tRNAs, forming tRNA-cmnm(5)s(2)U34. In Acetivibrio thermocellus (strain ATCC 27405 / DSM 1237 / JCM 9322 / NBRC 103400 / NCIMB 10682 / NRRL B-4536 / VPI 7372) (Clostridium thermocellum), this protein is tRNA modification GTPase MnmE.